Consider the following 355-residue polypeptide: GPN-loop GTPase 1 (355 aa).

Positions 1-30 (MAEKAENLPSSSAEASEEPSPQTGPNVNQK) are disordered. A compositionally biased stretch (low complexity) spans 9–21 (PSSSAEASEEPSP). A GTP-binding site is contributed by 40-45 (GSGKTT). The Gly-Pro-Asn (GPN)-loop; involved in dimer interface motif lies at 97–99 (GPN). A GTP-binding site is contributed by 200–203 (NKAD). The stretch at 286-311 (EKVLAEKKLLDEEERKKRDEETLKGK) forms a coiled coil.

Belongs to the GPN-loop GTPase family. In terms of assembly, heterodimer with GPN3. Binds to RNA polymerase II (RNAPII).

Its subcellular location is the cytoplasm. It is found in the nucleus. Functionally, small GTPase required for proper nuclear import of RNA polymerase II (RNAPII). May act at an RNAP assembly step prior to nuclear import. In Caenorhabditis elegans, this protein is GPN-loop GTPase 1.